The chain runs to 67 residues: Large ribosomal subunit protein bL35 (67 aa).

The protein belongs to the bacterial ribosomal protein bL35 family.

The protein is Large ribosomal subunit protein bL35 of Dehalococcoides mccartyi (strain ATCC BAA-2100 / JCM 16839 / KCTC 5957 / BAV1).